The following is a 475-amino-acid chain: Aspartyl/glutamyl-tRNA(Asn/Gln) amidotransferase subunit B (475 aa).

Belongs to the GatB/GatE family. GatB subfamily. As to quaternary structure, heterotrimer of A, B and C subunits.

The catalysed reaction is L-glutamyl-tRNA(Gln) + L-glutamine + ATP + H2O = L-glutaminyl-tRNA(Gln) + L-glutamate + ADP + phosphate + H(+). It catalyses the reaction L-aspartyl-tRNA(Asn) + L-glutamine + ATP + H2O = L-asparaginyl-tRNA(Asn) + L-glutamate + ADP + phosphate + 2 H(+). Allows the formation of correctly charged Asn-tRNA(Asn) or Gln-tRNA(Gln) through the transamidation of misacylated Asp-tRNA(Asn) or Glu-tRNA(Gln) in organisms which lack either or both of asparaginyl-tRNA or glutaminyl-tRNA synthetases. The reaction takes place in the presence of glutamine and ATP through an activated phospho-Asp-tRNA(Asn) or phospho-Glu-tRNA(Gln). This Bacillus cereus (strain ZK / E33L) protein is Aspartyl/glutamyl-tRNA(Asn/Gln) amidotransferase subunit B.